Consider the following 444-residue polypeptide: Maltoporin (444 aa).

The N-terminal stretch at Met1–Ala24 is a signal peptide.

Belongs to the porin LamB (TC 1.B.3) family. Homotrimer formed of three 18-stranded antiparallel beta-barrels, containing three independent channels.

The protein localises to the cell outer membrane. The catalysed reaction is beta-maltose(in) = beta-maltose(out). Functionally, involved in the transport of maltose and maltodextrins. This Enterobacter sp. (strain 638) protein is Maltoporin.